A 361-amino-acid polypeptide reads, in one-letter code: Chorismate synthase (361 aa).

Arg-48 and Arg-54 together coordinate NADP(+). FMN-binding positions include 125–127 (RSS), 238–239 (NA), Gly-278, 293–297 (KPTSS), and Arg-319.

It belongs to the chorismate synthase family. As to quaternary structure, homotetramer. FMNH2 serves as cofactor.

It carries out the reaction 5-O-(1-carboxyvinyl)-3-phosphoshikimate = chorismate + phosphate. Its pathway is metabolic intermediate biosynthesis; chorismate biosynthesis; chorismate from D-erythrose 4-phosphate and phosphoenolpyruvate: step 7/7. Catalyzes the anti-1,4-elimination of the C-3 phosphate and the C-6 proR hydrogen from 5-enolpyruvylshikimate-3-phosphate (EPSP) to yield chorismate, which is the branch point compound that serves as the starting substrate for the three terminal pathways of aromatic amino acid biosynthesis. This reaction introduces a second double bond into the aromatic ring system. This Salmonella typhi protein is Chorismate synthase.